A 380-amino-acid chain; its full sequence is DNA replication and repair protein RecF (380 aa).

30–37 (GENAQGKT) contributes to the ATP binding site.

The protein belongs to the RecF family.

It localises to the cytoplasm. Its function is as follows. The RecF protein is involved in DNA metabolism; it is required for DNA replication and normal SOS inducibility. RecF binds preferentially to single-stranded, linear DNA. It also seems to bind ATP. This is DNA replication and repair protein RecF from Synechococcus sp. (strain JA-3-3Ab) (Cyanobacteria bacterium Yellowstone A-Prime).